A 204-amino-acid polypeptide reads, in one-letter code: Glutathione S-transferase (204 aa).

The GST N-terminal domain maps to 3–80 (PSYKLTYCPV…YLGKQFGLSG (78 aa)). Residues tyrosine 9, tryptophan 40, lysine 44, 50 to 52 (GKT), and 64 to 65 (QS) contribute to the glutathione site. The 123-residue stretch at 82 to 204 (DDWENLEIDM…WVAKRPPTDL (123 aa)) folds into the GST C-terminal domain.

This sequence belongs to the GST superfamily. Sigma family.

It carries out the reaction RX + glutathione = an S-substituted glutathione + a halide anion + H(+). The polypeptide is Glutathione S-transferase (Blattella germanica (German cockroach)).